The sequence spans 209 residues: Mitochondrial import inner membrane translocase subunit Tim23 (209 aa).

Transmembrane regions (helical) follow at residues 73 to 93, 125 to 145, and 172 to 194; these read FELA…FGAM, ALWA…GVII, and GGLR…YALY.

Belongs to the Tim17/Tim22/Tim23 family. Component of the TIM23 complex at least composed of TIMM23, TIMM17 (TIMM17A or TIMM17B) and TIMM50; within this complex, directly interacts with TIMM50. The complex interacts with the TIMM44 component of the PAM complex and with DNAJC15. Upon mitochondrial depolarization, interacts with PINK1; the interaction is required for PINK1 accumulation at the outer mitochondrial membrane, kinase activation by autophosphorylation and PRKN recruitement to mitochondria.

It localises to the mitochondrion inner membrane. Essential component of the TIM23 complex, a complex that mediates the translocation of transit peptide-containing proteins across the mitochondrial inner membrane. Has a role in the activation of stress-induced mitophagy by protecting PINK1 from OMA1-mediated degradation and facilitating its accumulation at the outer mitochondrial membrane in response to depolarization. The polypeptide is Mitochondrial import inner membrane translocase subunit Tim23 (TIMM23) (Bos taurus (Bovine)).